A 213-amino-acid polypeptide reads, in one-letter code: Ras-related protein Rab-25 (213 aa).

Positions 21, 24, 25, 26, 27, 38, 39, 43, and 44 each coordinate GTP. Thr26 is a Mg(2+) binding site. 2 consecutive short sequence motifs (switch) follow at residues 35–49 and 67–84; these read NEFSHDSRTTIGVEF and DTAGLERYRAITSAYYRG. 2 residues coordinate Mg(2+): Thr44 and Asp67. Positions 70, 125, 126, 128, 156, and 157 each coordinate GTP. Residues Cys209 and Cys210 are each lipidated (S-geranylgeranyl cysteine). Cys210 bears the Cysteine methyl ester mark. Positions 211–213 are cleaved as a propeptide — removed in mature form; that stretch reads INL.

The protein belongs to the small GTPase superfamily. Rab family. Interacts (GTP-bound form) with RAB11FIP1, RAB11FIP2, RAB11FIP3 and RAB11FIP4. Interacts (via the hypervariable C-terminal region) with ITGB1 (via the cytoplasmic region); the interaction is GTP-dependent. Interacts with ITGAV. Associates with the integrin alpha-V/beta-1 heterodimer. Interacts with VPS33B. Mg(2+) is required as a cofactor. As to expression, expression is restricted to epithelial cells. Expressed in the gastrointestinal mucosa, (highest expression seen in the ileum and colon), kidney, and lung. A very minor and variable level of expression is seen in the splenic tissue.

The protein localises to the cell membrane. It is found in the cell projection. The protein resides in the pseudopodium membrane. It localises to the cytoplasmic vesicle. The enzyme catalyses GTP + H2O = GDP + phosphate + H(+). Its activity is regulated as follows. Regulated by guanine nucleotide exchange factors (GEFs) which promote the exchange of bound GDP for free GTP. Regulated by GTPase activating proteins (GAPs) which increase the GTP hydrolysis activity. Inhibited by GDP dissociation inhibitors (GDIs) which prevent Rab-GDP dissociation. In terms of biological role, the small GTPases Rab are key regulators of intracellular membrane trafficking, from the formation of transport vesicles to their fusion with membranes. Rabs cycle between an inactive GDP-bound form and an active GTP-bound form that is able to recruit to membranes different set of downstream effectors directly responsible for vesicle formation, movement, tethering and fusion. RAB25 regulates epithelial cell differentiation, proliferation and survival, thereby playing key roles in tumorigenesis. Promotes invasive migration of cells in which it functions to localize and maintain integrin alpha-V/beta-1 at the tips of extending pseudopodia. Involved in the regulation of epithelial morphogenesis through the control of CLDN4 expression and localization at tight junctions. May selectively regulate the apical recycling pathway. Together with MYO5B regulates transcytosis. The chain is Ras-related protein Rab-25 (RAB25) from Oryctolagus cuniculus (Rabbit).